The following is a 250-amino-acid chain: Ino eighty subunit 3 (250 aa).

The tract at residues 29–70 is disordered; the sequence is PDFLEKDPHHKKFHNADGLNQQGSSTPSTATDANAASTASTH. The span at 52 to 70 shows a compositional bias: low complexity; sequence SSTPSTATDANAASTASTH. Phosphoserine occurs at positions 157 and 211.

In terms of assembly, component of the chromatin-remodeling INO80 complex, at least composed of ARP4, ARP5, ARP8, RVB1, RVB2, TAF14, NHP10, IES1, IES3, IES4, IES6, ACT1, IES2, IES5 and INO80.

It is found in the nucleus. In terms of biological role, probably involved in transcription regulation via its interaction with the INO80 complex, a chromatin-remodeling complex. This is Ino eighty subunit 3 (IES3) from Saccharomyces cerevisiae (strain ATCC 204508 / S288c) (Baker's yeast).